Consider the following 210-residue polypeptide: Cyclin-U1-1 (210 aa).

Belongs to the cyclin family. Cyclin U/P subfamily. As to quaternary structure, interacts with CDKA-1. In terms of tissue distribution, expressed in roots and flowers. Expressed in the shoot apex, leaf primordia and young leaves.

The chain is Cyclin-U1-1 (CYCU1-1) from Arabidopsis thaliana (Mouse-ear cress).